Here is a 365-residue protein sequence, read N- to C-terminus: Peptide chain release factor 2 (365 aa).

Gln-252 is subject to N5-methylglutamine.

Belongs to the prokaryotic/mitochondrial release factor family. Post-translationally, methylated by PrmC. Methylation increases the termination efficiency of RF2.

It is found in the cytoplasm. Functionally, peptide chain release factor 2 directs the termination of translation in response to the peptide chain termination codons UGA and UAA. The sequence is that of Peptide chain release factor 2 from Tolumonas auensis (strain DSM 9187 / NBRC 110442 / TA 4).